The sequence spans 40 residues: Photosystem II reaction center protein T (40 aa).

Residues Ala3–Phe23 traverse the membrane as a helical segment.

The protein belongs to the PsbT family. PSII is composed of 1 copy each of membrane proteins PsbA, PsbB, PsbC, PsbD, PsbE, PsbF, PsbH, PsbI, PsbJ, PsbK, PsbL, PsbM, PsbT, PsbY, PsbZ, Psb30/Ycf12, at least 3 peripheral proteins of the oxygen-evolving complex and a large number of cofactors. It forms dimeric complexes.

The protein resides in the plastid. It is found in the chloroplast thylakoid membrane. Found at the monomer-monomer interface of the photosystem II (PS II) dimer, plays a role in assembly and dimerization of PSII. PSII is a light-driven water plastoquinone oxidoreductase, using light energy to abstract electrons from H(2)O, generating a proton gradient subsequently used for ATP formation. In Anthoceros angustus (Hornwort), this protein is Photosystem II reaction center protein T.